The chain runs to 197 residues: GTP cyclohydrolase-2 (197 aa).

49 to 53 (RVHSE) contributes to the GTP binding site. 3 residues coordinate Zn(2+): Cys-54, Cys-65, and Cys-67. GTP is bound by residues Gln-70, 92 to 94 (EGR), and Thr-114. Asp-126 acts as the Proton acceptor in catalysis. Arg-128 (nucleophile) is an active-site residue. Residues Thr-149 and Lys-154 each contribute to the GTP site.

It belongs to the GTP cyclohydrolase II family. As to quaternary structure, homodimer. Zn(2+) is required as a cofactor.

The catalysed reaction is GTP + 4 H2O = 2,5-diamino-6-hydroxy-4-(5-phosphoribosylamino)-pyrimidine + formate + 2 phosphate + 3 H(+). The protein operates within cofactor biosynthesis; riboflavin biosynthesis; 5-amino-6-(D-ribitylamino)uracil from GTP: step 1/4. Functionally, catalyzes the conversion of GTP to 2,5-diamino-6-ribosylamino-4(3H)-pyrimidinone 5'-phosphate (DARP), formate and pyrophosphate. The chain is GTP cyclohydrolase-2 from Pectobacterium atrosepticum (strain SCRI 1043 / ATCC BAA-672) (Erwinia carotovora subsp. atroseptica).